Here is a 293-residue protein sequence, read N- to C-terminus: Pyridoxal 5'-phosphate synthase subunit PdxS (293 aa).

D23 provides a ligand contact to D-ribose 5-phosphate. K80 serves as the catalytic Schiff-base intermediate with D-ribose 5-phosphate. Position 152 (G152) interacts with D-ribose 5-phosphate. R164 is a binding site for D-glyceraldehyde 3-phosphate. D-ribose 5-phosphate contacts are provided by residues G213 and G234–S235.

The protein belongs to the PdxS/SNZ family. In the presence of PdxT, forms a dodecamer of heterodimers.

The catalysed reaction is aldehydo-D-ribose 5-phosphate + D-glyceraldehyde 3-phosphate + L-glutamine = pyridoxal 5'-phosphate + L-glutamate + phosphate + 3 H2O + H(+). It participates in cofactor biosynthesis; pyridoxal 5'-phosphate biosynthesis. Its function is as follows. Catalyzes the formation of pyridoxal 5'-phosphate from ribose 5-phosphate (RBP), glyceraldehyde 3-phosphate (G3P) and ammonia. The ammonia is provided by the PdxT subunit. Can also use ribulose 5-phosphate and dihydroxyacetone phosphate as substrates, resulting from enzyme-catalyzed isomerization of RBP and G3P, respectively. This is Pyridoxal 5'-phosphate synthase subunit PdxS from Desulfovibrio desulfuricans (strain ATCC 27774 / DSM 6949 / MB).